The sequence spans 318 residues: tRNA-cytidine(32) 2-sulfurtransferase (318 aa).

Positions 52–57 (SGGKDS) match the PP-loop motif motif. [4Fe-4S] cluster contacts are provided by Cys127, Cys130, and Cys218.

It belongs to the TtcA family. Homodimer. It depends on Mg(2+) as a cofactor. The cofactor is [4Fe-4S] cluster.

The protein localises to the cytoplasm. It carries out the reaction cytidine(32) in tRNA + S-sulfanyl-L-cysteinyl-[cysteine desulfurase] + AH2 + ATP = 2-thiocytidine(32) in tRNA + L-cysteinyl-[cysteine desulfurase] + A + AMP + diphosphate + H(+). The protein operates within tRNA modification. Catalyzes the ATP-dependent 2-thiolation of cytidine in position 32 of tRNA, to form 2-thiocytidine (s(2)C32). The sulfur atoms are provided by the cysteine/cysteine desulfurase (IscS) system. The chain is tRNA-cytidine(32) 2-sulfurtransferase from Actinobacillus pleuropneumoniae serotype 5b (strain L20).